A 101-amino-acid polypeptide reads, in one-letter code: Gastrin (101 aa).

Residues 1 to 21 (MQRLCVYVLIFALALAAFSEA) form the signal peptide. The segment at 22–82 (SWKPRSQQPD…SKKQGPWLEE (61 aa)) is disordered. The residue at position 59 (Q59) is a Pyrrolidone carboxylic acid; in form big gastrin. A Pyrrolidone carboxylic acid; in form gastrin modification is found at Q76. Y87 bears the Sulfotyrosine; partial mark. F92 carries the phenylalanine amide modification. The residue at position 96 (S96) is a Phosphoserine. A propeptide spans 96–101 (SAEDEN) (removed in mature form).

The protein belongs to the gastrin/cholecystokinin family. In terms of processing, two different processing pathways probably exist in antral G-cells. In the dominant pathway progastrin is cleaved at three sites resulting in two major bioactive gastrins, gastrin-34 and gastrin-17. In the putative alternative pathway, progastrin may be processed only at the most C-terminal dibasic site resulting in the synthesis of gastrin-71. Sulfation enhances proteolytic processing, and blocks peptide degradation. Levels of sulfation differ between proteolytically-cleaved gastrins. Thus, gastrin-6 is almost 73% sulfated, whereas the larger gastrins are less than 50% sulfated. Sulfation levels are also tissue-specific.

The protein localises to the secreted. Its function is as follows. Gastrin stimulates the stomach mucosa to produce and secrete hydrochloric acid and the pancreas to secrete its digestive enzymes. It also stimulates smooth muscle contraction and increases blood circulation and water secretion in the stomach and intestine. The sequence is that of Gastrin (GAST) from Homo sapiens (Human).